The sequence spans 161 residues: Protein-export protein SecB (161 aa).

It belongs to the SecB family. Homotetramer, a dimer of dimers. One homotetramer interacts with 1 SecA dimer.

The protein localises to the cytoplasm. Functionally, one of the proteins required for the normal export of preproteins out of the cell cytoplasm. It is a molecular chaperone that binds to a subset of precursor proteins, maintaining them in a translocation-competent state. It also specifically binds to its receptor SecA. The chain is Protein-export protein SecB from Shewanella sp. (strain ANA-3).